Reading from the N-terminus, the 200-residue chain is MRPLPSGRRKTRGISLGLFALCLAAARCLQSQGVSLYIPQATINATVKEDILLSVEYSCHGVPTIEWTYSSNWGTQKIVEWKPGTQANISQSHKDRVCTFDNGSIQLFSVGVRDSGYYVITVTERLGSSQFGTIVLHVSEILYEDLHFVAVILAFLAAVAAVLISLMWVCNKCAYKFQRKRRHKLKESTTEEIELEDVEC.

A signal peptide spans 1–28 (MRPLPSGRRKTRGISLGLFALCLAAARC). The Extracellular portion of the chain corresponds to 29-147 (LQSQGVSLYI…VSEILYEDLH (119 aa)). The Ig-like C2-type domain occupies 37–139 (YIPQATINAT…QFGTIVLHVS (103 aa)). An N-linked (GlcNAc...) asparagine glycan is attached at N102. Residues 148–168 (FVAVILAFLAAVAAVLISLMW) traverse the membrane as a helical segment. The Cytoplasmic segment spans residues 169 to 200 (VCNKCAYKFQRKRRHKLKESTTEEIELEDVEC). The interval 170-186 (CNKCAYKFQRKRRHKLK) is important for CDC42-dependent filopodia induction.

Can homooligomerize through cis interactions within the same cell membrane. N-glycosylated.

It is found in the cell membrane. The protein resides in the cell projection. The protein localises to the dendrite. It localises to the axon. Its function is as follows. Cell adhesion-like membrane protein of the central nervous system (CNS) which modulates both the position and complexity of central neurons by altering their membrane morphology and dynamics. Involved in the formation of neuronal dendrites and protrusions including dendritic filopodia. In synaptogenesis, regulates synapse formation by altering dendritic spine morphology and actin distribution. Promotes formation of unstable neuronal spines such as thin and branched types. Regulates neuronal morphogenesis and migration during cortical development in the brain. This chain is V-set and transmembrane domain-containing protein 5 (VSTM5), found in Homo sapiens (Human).